Reading from the N-terminus, the 567-residue chain is Laccase-3 (567 aa).

Residues 1–24 form the signal peptide; the sequence is MASSSSSRLLFLLSCSVLALLAGA. 2 consecutive Plastocyanin-like domains span residues 32–148 and 158–310; these read IVQE…PREN and REVP…YDCG. The N-linked (GlcNAc...) asparagine glycan is linked to asparagine 78. Cu cation contacts are provided by histidine 82, histidine 84, histidine 127, and histidine 129. N-linked (GlcNAc...) asparagine glycosylation is found at asparagine 148, asparagine 187, asparagine 203, asparagine 298, asparagine 330, asparagine 379, and asparagine 389. Residues 415–551 form the Plastocyanin-like 3 domain; that stretch reads DFPAYPPVQF…AMAFLVEDGY (137 aa). Histidine 468, histidine 471, histidine 473, histidine 530, cysteine 531, histidine 532, and histidine 536 together coordinate Cu cation.

This sequence belongs to the multicopper oxidase family. Cu cation is required as a cofactor.

The protein resides in the secreted. It is found in the extracellular space. It localises to the apoplast. It carries out the reaction 4 hydroquinone + O2 = 4 benzosemiquinone + 2 H2O. Lignin degradation and detoxification of lignin-derived products. This chain is Laccase-3 (LAC3), found in Oryza sativa subsp. japonica (Rice).